The chain runs to 563 residues: Coiled-coil domain-containing protein 38 (563 aa).

3 coiled-coil regions span residues 129–212 (KRNT…KTEF), 384–415 (NIEFLLEQEEMLKANCVREEEKAAELQLRSRL), and 485–522 (ERMKQKERRQKFRDEKMREKQRHQEERLKAALEKAVAQ). Residues 521–550 (AQPKKKLGRRLVYHSKPPSANKQQLPLVNE) form a disordered region. Over residues 523–533 (PKKKLGRRLVY) the composition is skewed to basic residues.

As to quaternary structure, interacts with CCDC42, CFAP53, IFT88 and ODF2. Interacts with CCDC146. Interacts with TEKT3. Interacts with ubiquitinated histone H2A.

The protein resides in the cytoplasm. It is found in the cytoskeleton. The protein localises to the microtubule organizing center. It localises to the centrosome. Its subcellular location is the perinuclear region. The protein resides in the cell projection. It is found in the cilium. The protein localises to the flagellum. In terms of biological role, essential for male fertility. Required for sperm flagellum biogenesis. Also required for acrosome biogenesis. Required for the attachment of developing acrosomes to the nucleus during spermiogenesis and may be involved in the transport of fibrous sheath components. The protein is Coiled-coil domain-containing protein 38 (CCDC38) of Macaca fascicularis (Crab-eating macaque).